Here is a 335-residue protein sequence, read N- to C-terminus: Transcriptional coactivator YAP1-B (335 aa).

Residues 1–13 (MEPGSQQQPSAPG) are compositionally biased toward low complexity. The disordered stretch occupies residues 1 to 21 (MEPGSQQQPSAPGQQPPPVGH). S30 carries the post-translational modification Phosphoserine; by LATS1 and LATS2. A compositionally biased stretch (polar residues) spans 114 to 124 (MNQQRLSQSAP). The tract at residues 114–146 (MNQQRLSQSAPVKSPPALQPQSPPSGVLGSGGN) is disordered. Over residues 126–136 (KSPPALQPQSP) the composition is skewed to pro residues. The interval 137 to 335 (PSGVLGSGGN…LDKESFLTWL (199 aa)) is transactivation domain. A coiled-coil region spans residues 145 to 173 (GNQQMRLQQLQMEKERLRLKHQELLRQVR).

It belongs to the YAP1 family. Phosphorylated by lats1 and lats2; leading to cytoplasmic translocation and inactivation.

It localises to the cytoplasm. It is found in the nucleus. Its subcellular location is the cell junction. The protein localises to the tight junction. The protein resides in the cell membrane. In terms of biological role, transcriptional regulator which can act both as a coactivator and a corepressor and is the critical downstream regulatory target in the Hippo signaling pathway that plays a pivotal role in organ size control and tumor suppression by restricting proliferation and promoting apoptosis. Plays a key role in tissue tension and 3D tissue shape by regulating cortical actomyosin network formation. The sequence is that of Transcriptional coactivator YAP1-B from Xenopus laevis (African clawed frog).